The following is a 484-amino-acid chain: Protein LAZ1 homolog 1 (484 aa).

The signal sequence occupies residues 1–19 (MEWRGILCSLLFIVSVGES). 6 consecutive transmembrane segments (helical) span residues 42-62 (PILSASVFVVIAILLPMYLIF), 76-96 (FLIGLILMVPVYAVESFLSLV), 190-210 (MILKMICALLAMILEAFGVYG), 219-239 (GYPYLAVVLNFSQTWALYCLV), 264-284 (IVFLTWWQGIIVAFLFSMGLV), and 299-319 (YIICIEMGIAAVVHLYVFPAA). The tract at residues 344–364 (PDPEEVKDSERTTRTRYGRHD) is disordered. The span at 347 to 364 (EEVKDSERTTRTRYGRHD) shows a compositional bias: basic and acidic residues. Residues 406 to 428 (IAKINRTFHQISENVKRFEQQKK) adopt a coiled-coil conformation. The disordered stretch occupies residues 459-484 (VSDSGLGSTNRHHQSRVSGLWTRMRR).

This sequence belongs to the TMEM184 family.

It localises to the membrane. The sequence is that of Protein LAZ1 homolog 1 from Arabidopsis thaliana (Mouse-ear cress).